Consider the following 88-residue polypeptide: Small ribosomal subunit protein bS20 (88 aa).

The segment at 1–27 (MANSKSAKKRALQSEKRRQHNASRRSM) is disordered.

This sequence belongs to the bacterial ribosomal protein bS20 family.

Binds directly to 16S ribosomal RNA. This Shewanella baltica (strain OS223) protein is Small ribosomal subunit protein bS20.